We begin with the raw amino-acid sequence, 485 residues long: Glutamate--tRNA ligase 2 (485 aa).

The 'HIGH' region signature appears at Pro-10 to Asn-20. The 'KMSKS' region signature appears at Lys-252–Arg-256. An ATP-binding site is contributed by Lys-255.

The protein belongs to the class-I aminoacyl-tRNA synthetase family. Glutamate--tRNA ligase type 1 subfamily. As to quaternary structure, monomer.

It localises to the cytoplasm. It carries out the reaction tRNA(Glu) + L-glutamate + ATP = L-glutamyl-tRNA(Glu) + AMP + diphosphate. Functionally, catalyzes the attachment of glutamate to tRNA(Glu) in a two-step reaction: glutamate is first activated by ATP to form Glu-AMP and then transferred to the acceptor end of tRNA(Glu). The protein is Glutamate--tRNA ligase 2 of Caldanaerobacter subterraneus subsp. tengcongensis (strain DSM 15242 / JCM 11007 / NBRC 100824 / MB4) (Thermoanaerobacter tengcongensis).